Consider the following 301-residue polypeptide: 4-hydroxy-tetrahydrodipicolinate synthase (301 aa).

A pyruvate-binding site is contributed by T57. Y145 (proton donor/acceptor) is an active-site residue. K173 (schiff-base intermediate with substrate) is an active-site residue. I213 lines the pyruvate pocket.

Belongs to the DapA family. Homotetramer; dimer of dimers.

It localises to the cytoplasm. The enzyme catalyses L-aspartate 4-semialdehyde + pyruvate = (2S,4S)-4-hydroxy-2,3,4,5-tetrahydrodipicolinate + H2O + H(+). The protein operates within amino-acid biosynthesis; L-lysine biosynthesis via DAP pathway; (S)-tetrahydrodipicolinate from L-aspartate: step 3/4. Its function is as follows. Catalyzes the condensation of (S)-aspartate-beta-semialdehyde [(S)-ASA] and pyruvate to 4-hydroxy-tetrahydrodipicolinate (HTPA). In Corynebacterium diphtheriae (strain ATCC 700971 / NCTC 13129 / Biotype gravis), this protein is 4-hydroxy-tetrahydrodipicolinate synthase.